The primary structure comprises 162 residues: Large ribosomal subunit protein uL10 (162 aa).

This sequence belongs to the universal ribosomal protein uL10 family. As to quaternary structure, part of the ribosomal stalk of the 50S ribosomal subunit. The N-terminus interacts with L11 and the large rRNA to form the base of the stalk. The C-terminus forms an elongated spine to which L12 dimers bind in a sequential fashion forming a multimeric L10(L12)X complex.

Forms part of the ribosomal stalk, playing a central role in the interaction of the ribosome with GTP-bound translation factors. The polypeptide is Large ribosomal subunit protein uL10 (Borrelia duttonii (strain Ly)).